The sequence spans 465 residues: Probable Xaa-Pro aminopeptidase PEPP (465 aa).

4 residues coordinate Mn(2+): D259, D270, E395, and E435.

Belongs to the peptidase M24B family. Mn(2+) is required as a cofactor.

It catalyses the reaction Release of any N-terminal amino acid, including proline, that is linked to proline, even from a dipeptide or tripeptide.. In terms of biological role, catalyzes the removal of a penultimate prolyl residue from the N-termini of peptides. The chain is Probable Xaa-Pro aminopeptidase PEPP (PEPP) from Pyricularia oryzae (strain 70-15 / ATCC MYA-4617 / FGSC 8958) (Rice blast fungus).